The primary structure comprises 208 residues: Transmembrane protein 222 (208 aa).

The interval 1–34 (MAEAEGSSPLLLQPPPPPPRMAEVETPTGAETDM) is disordered. At 1–55 (MAEAEGSSPLLLQPPPPPPRMAEVETPTGAETDMKQYHGSGGVVMDVERSRFPYC) the chain is on the extracellular side. A helical membrane pass occupies residues 56-76 (VVWTPIPVLTWFFPIIGHMGI). Residues 77-164 (CTSAGVIRDF…MRYNNSTNWN (88 aa)) lie on the Cytoplasmic side of the membrane. A helical membrane pass occupies residues 165–185 (MVTLCCFCLIYGKYVSVGAFV). K186 is a topological domain (extracellular). The helical transmembrane segment at 187–207 (TWLPFVLLLGIILTVSLVFNL) threads the bilayer. R208 is a topological domain (cytoplasmic).

It is found in the membrane. It localises to the cell projection. Its subcellular location is the dendrite. This is Transmembrane protein 222 (Tmem222) from Mus musculus (Mouse).